A 199-amino-acid polypeptide reads, in one-letter code: Large ribosomal subunit protein uL13A (199 aa).

An N-acetylserine modification is found at S2. K177 is covalently cross-linked (Glycyl lysine isopeptide (Lys-Gly) (interchain with G-Cter in ubiquitin)).

This sequence belongs to the universal ribosomal protein uL13 family. As to quaternary structure, component of the large ribosomal subunit (LSU). Mature yeast ribosomes consist of a small (40S) and a large (60S) subunit. The 40S small subunit contains 1 molecule of ribosomal RNA (18S rRNA) and 33 different proteins (encoded by 57 genes). The large 60S subunit contains 3 rRNA molecules (25S, 5.8S and 5S rRNA) and 46 different proteins (encoded by 81 genes). N-terminally acetylated by acetyltransferase NatA.

The protein localises to the cytoplasm. Component of the ribosome, a large ribonucleoprotein complex responsible for the synthesis of proteins in the cell. The small ribosomal subunit (SSU) binds messenger RNAs (mRNAs) and translates the encoded message by selecting cognate aminoacyl-transfer RNA (tRNA) molecules. The large subunit (LSU) contains the ribosomal catalytic site termed the peptidyl transferase center (PTC), which catalyzes the formation of peptide bonds, thereby polymerizing the amino acids delivered by tRNAs into a polypeptide chain. The nascent polypeptides leave the ribosome through a tunnel in the LSU and interact with protein factors that function in enzymatic processing, targeting, and the membrane insertion of nascent chains at the exit of the ribosomal tunnel. In Saccharomyces cerevisiae (strain ATCC 204508 / S288c) (Baker's yeast), this protein is Large ribosomal subunit protein uL13A.